Consider the following 115-residue polypeptide: Large ribosomal subunit protein bL19 (115 aa).

This sequence belongs to the bacterial ribosomal protein bL19 family.

Functionally, this protein is located at the 30S-50S ribosomal subunit interface and may play a role in the structure and function of the aminoacyl-tRNA binding site. This Tolumonas auensis (strain DSM 9187 / NBRC 110442 / TA 4) protein is Large ribosomal subunit protein bL19.